Here is a 228-residue protein sequence, read N- to C-terminus: Extracellular protease inhibitor 10 (228 aa).

The N-terminal stretch at 1–22 is a signal peptide; that stretch reads MKSAFTLSLALVAVTATISAAA. 3 Kazal-like domains span residues 23–72, 90–127, and 156–208; these read DDNC…ECAS, TSGT…AKCK, and GYQG…EGTL. N-linked (GlcNAc...) asparagine glycosylation occurs at Asn25. 3 disulfides stabilise this stretch: Cys26-Cys56, Cys30-Cys49, and Cys38-Cys70. The tract at residues 69 to 92 is disordered; the sequence is ECASTPASSATPSPVTSSTGSTSG. Residues 71-92 are compositionally biased toward low complexity; the sequence is ASTPASSATPSPVTSSTGSTSG. 4 cysteine pairs are disulfide-bonded: Cys96–Cys126, Cys100–Cys119, Cys162–Cys193, and Cys167–Cys186. Residue Asn199 is glycosylated (N-linked (GlcNAc...) asparagine).

As to quaternary structure, interacts with host subtilisin-like protease P69B.

It localises to the secreted. In terms of biological role, secreted effector that interacts with and inhibits the pathogenesis-related P69B subtilisin-like serine protease of host tomato. Inhibition of host proteases by a pathogen extracellular protease inhibitor forms a specific type of defense-counterdefense mechanism between plants and microbial pathogens. The chain is Extracellular protease inhibitor 10 from Phytophthora infestans (strain T30-4) (Potato late blight agent).